A 395-amino-acid chain; its full sequence is MMILGNLRVATLSDGYGLIPDAAILIEGGRIQWVGPEAHLPPSAAPRHDMGGRLCTPALIDCHTHAVFAGTRAAEFEMRLKGASYAEVAAAGGGIVSTVTATRAASADELLAASLPRIDAMLAGGVGTVEIKSGYGLDIETELRMLRVARRIGELRKVRVRTSFLGAHAVPPDYRGRPDAYLAEVVLPALKVAQDEGLVDAVDGFCEGIAFSPAQIAHLFAQAHKLRLPVKLHAEQLSNLGGAALAARHDALSADHLEYLDAEGVAALAAAGTVAVLLPGAFYALRETQAPPVAALRAAGVPMAVATDLNPGTSPLGALGLAMNMACTLFRLTPEEALAGTTIHAARALGLSDTGRIAPGFRADLAIWEAEHPAELSWRIGPAPLHARLHEGEFV.

Residues His-63 and His-65 each coordinate Fe(3+). Zn(2+)-binding residues include His-63 and His-65. 4-imidazolone-5-propanoate contacts are provided by Arg-72, Tyr-135, and His-168. Residue Tyr-135 participates in N-formimidoyl-L-glutamate binding. His-233 is a binding site for Fe(3+). Position 233 (His-233) interacts with Zn(2+). Gln-236 is a 4-imidazolone-5-propanoate binding site. Asp-308 contacts Fe(3+). Residue Asp-308 coordinates Zn(2+). Residues Asn-310 and Gly-312 each contribute to the N-formimidoyl-L-glutamate site. Residue Thr-313 coordinates 4-imidazolone-5-propanoate.

Belongs to the metallo-dependent hydrolases superfamily. HutI family. It depends on Zn(2+) as a cofactor. Requires Fe(3+) as cofactor.

The protein resides in the cytoplasm. It carries out the reaction 4-imidazolone-5-propanoate + H2O = N-formimidoyl-L-glutamate. It participates in amino-acid degradation; L-histidine degradation into L-glutamate; N-formimidoyl-L-glutamate from L-histidine: step 3/3. In terms of biological role, catalyzes the hydrolytic cleavage of the carbon-nitrogen bond in imidazolone-5-propanoate to yield N-formimidoyl-L-glutamate. It is the third step in the universal histidine degradation pathway. In Cereibacter sphaeroides (strain ATCC 17029 / ATH 2.4.9) (Rhodobacter sphaeroides), this protein is Imidazolonepropionase.